The sequence spans 229 residues: Peptide methionine sulfoxide reductase B3, chloroplastic (229 aa).

A chloroplast-targeting transit peptide spans methionine 1–cysteine 71. The MsrB domain maps to glutamate 102 to alanine 223. Residues cysteine 141, cysteine 144, cysteine 187, and cysteine 190 each contribute to the Zn(2+) site. An intrachain disulfide couples cysteine 159 to cysteine 212. Catalysis depends on cysteine 212, which acts as the Nucleophile.

This sequence belongs to the MsrB Met sulfoxide reductase family. It depends on Zn(2+) as a cofactor.

It is found in the plastid. Its subcellular location is the chloroplast. The enzyme catalyses L-methionyl-[protein] + [thioredoxin]-disulfide + H2O = L-methionyl-(R)-S-oxide-[protein] + [thioredoxin]-dithiol. Its function is as follows. Catalyzes the reduction of methionine sulfoxide (MetSO) to methionine in proteins. Plays a protective role against oxidative stress by restoring activity to proteins that have been inactivated by methionine oxidation. MSRB family specifically reduces the MetSO R-enantiomer. The chain is Peptide methionine sulfoxide reductase B3, chloroplastic (MSRB3) from Oryza sativa subsp. japonica (Rice).